Reading from the N-terminus, the 577-residue chain is Putative laccase-1 (577 aa).

A signal peptide spans 1-28; the sequence is MGTAKIPALLWFLLAGLVLALAVNPAHG. Plastocyanin-like domains are found at residues 37-153 and 163-316; these read FITE…PKRG and KEIP…YTDS. N42 and N83 each carry an N-linked (GlcNAc...) asparagine glycan. Positions 87 and 89 each coordinate Cu cation. N-linked (GlcNAc...) asparagine glycosylation occurs at N115. Cu cation contacts are provided by H132 and H134. N-linked (GlcNAc...) asparagine glycosylation is found at N276, N304, N382, and N402. The 120-residue stretch at 442 to 561 folds into the Plastocyanin-like 3 domain; sequence DINGGGPLLT…DTMFIVKDGK (120 aa). Cu cation-binding residues include H478, H481, H483, H540, C541, H542, H546, and M551.

The protein belongs to the multicopper oxidase family. The cofactor is Cu cation.

It is found in the secreted. It localises to the extracellular space. Its subcellular location is the apoplast. The enzyme catalyses 4 hydroquinone + O2 = 4 benzosemiquinone + 2 H2O. Its function is as follows. Lignin degradation and detoxification of lignin-derived products. The chain is Putative laccase-1 (LAC1) from Oryza sativa subsp. japonica (Rice).